The following is a 371-amino-acid chain: GTPase Obg (371 aa).

One can recognise an Obg domain in the interval 1–159; it reads MKFLDQAKVY…KTIWLRLKLI (159 aa). In terms of domain architecture, OBG-type G spans 160-327; that stretch reads ADAGLVGLPN…VLRALRDIIV (168 aa). Residues 166–173, 191–195, 212–215, 279–282, and 308–310 each bind GTP; these read GLPNAGKS, FTTLH, DIPG, SQID, and SAI. Positions 173 and 193 each coordinate Mg(2+). The segment at 337–371 is disordered; it reads APMKALKVRHRDMQSSGNEGESEDNSDRDDEEQQG. Positions 356–371 are enriched in acidic residues; the sequence is GESEDNSDRDDEEQQG.

It belongs to the TRAFAC class OBG-HflX-like GTPase superfamily. OBG GTPase family. Monomer. It depends on Mg(2+) as a cofactor.

It localises to the cytoplasm. In terms of biological role, an essential GTPase which binds GTP, GDP and possibly (p)ppGpp with moderate affinity, with high nucleotide exchange rates and a fairly low GTP hydrolysis rate. Plays a role in control of the cell cycle, stress response, ribosome biogenesis and in those bacteria that undergo differentiation, in morphogenesis control. The protein is GTPase Obg of Rhizobium rhizogenes (strain K84 / ATCC BAA-868) (Agrobacterium radiobacter).